The sequence spans 329 residues: Phosphate import ATP-binding protein PstB (329 aa).

One can recognise an ABC transporter domain in the interval 83 to 325 (FEIENLNFWY…PKQKETNRYI (243 aa)). ATP is bound at residue 116-123 (GKSGCGKS).

Belongs to the ABC transporter superfamily. Phosphate importer (TC 3.A.1.7) family. In terms of assembly, the complex is composed of two ATP-binding proteins (PstB), two transmembrane proteins (PstC and PstA) and a solute-binding protein (PstS).

It localises to the cell membrane. It carries out the reaction phosphate(out) + ATP + H2O = ADP + 2 phosphate(in) + H(+). Part of the ABC transporter complex PstSACB involved in phosphate import. Responsible for energy coupling to the transport system. This Mycoplasma pneumoniae (strain ATCC 29342 / M129 / Subtype 1) (Mycoplasmoides pneumoniae) protein is Phosphate import ATP-binding protein PstB.